Reading from the N-terminus, the 147-residue chain is Transcription elongation factor Spt5 (147 aa).

The 32-residue stretch at 91 to 122 folds into the KOW domain; it reads KGDVVEIIAGPFKGERAKVIRVDKHKEEVTLE.

This sequence belongs to the archaeal Spt5 family. Heterodimer composed of Spt4 and Spt5. Interacts with RNA polymerase (RNAP). Forms a homodimer in solution.

Functionally, stimulates transcription elongation. In Methanocaldococcus jannaschii (strain ATCC 43067 / DSM 2661 / JAL-1 / JCM 10045 / NBRC 100440) (Methanococcus jannaschii), this protein is Transcription elongation factor Spt5.